A 319-amino-acid chain; its full sequence is Ribosomal RNA small subunit methyltransferase H (319 aa).

S-adenosyl-L-methionine contacts are provided by residues 39-41 (GGH), D59, F83, D104, and Q111.

Belongs to the methyltransferase superfamily. RsmH family.

It localises to the cytoplasm. The catalysed reaction is cytidine(1402) in 16S rRNA + S-adenosyl-L-methionine = N(4)-methylcytidine(1402) in 16S rRNA + S-adenosyl-L-homocysteine + H(+). Functionally, specifically methylates the N4 position of cytidine in position 1402 (C1402) of 16S rRNA. The polypeptide is Ribosomal RNA small subunit methyltransferase H (Ralstonia pickettii (strain 12D)).